The primary structure comprises 629 residues: tRNA uridine 5-carboxymethylaminomethyl modification enzyme MnmG (629 aa).

Residues 14-19 (GAGHAG), Val-126, and Ser-181 each bind FAD. 273 to 287 (GPRYCPSIEDKVVRF) serves as a coordination point for NAD(+). An FAD-binding site is contributed by Gln-370.

This sequence belongs to the MnmG family. In terms of assembly, homodimer. Heterotetramer of two MnmE and two MnmG subunits. FAD serves as cofactor.

It is found in the cytoplasm. Functionally, NAD-binding protein involved in the addition of a carboxymethylaminomethyl (cmnm) group at the wobble position (U34) of certain tRNAs, forming tRNA-cmnm(5)s(2)U34. This is tRNA uridine 5-carboxymethylaminomethyl modification enzyme MnmG from Bacillus cereus (strain ATCC 10987 / NRS 248).